Reading from the N-terminus, the 2298-residue chain is Protein Ycf2 (2298 aa).

Position 1652–1659 (1652–1659 (GSIGTGRS)) interacts with ATP.

It belongs to the Ycf2 family.

Its subcellular location is the plastid. It is found in the chloroplast stroma. In terms of biological role, probable ATPase of unknown function. Its presence in a non-photosynthetic plant (Epifagus virginiana) and experiments in tobacco indicate that it has an essential function which is probably not related to photosynthesis. The polypeptide is Protein Ycf2 (Aethionema cordifolium (Lebanon stonecress)).